A 304-amino-acid polypeptide reads, in one-letter code: Polyisoprenyl-teichoic acid--peptidoglycan teichoic acid transferase TagU (304 aa).

Topologically, residues 1-4 (MKKK) are cytoplasmic. A helical; Signal-anchor for type II membrane protein membrane pass occupies residues 5–25 (ILFWILGIIGIMIIGGGVYAY). Residues 26–304 (NVYSSVSKTL…KLRAHLELTK (279 aa)) are Extracellular-facing.

The protein belongs to the LytR/CpsA/Psr (LCP) family.

It localises to the cell membrane. Its pathway is cell wall biogenesis. May catalyze the final step in cell wall teichoic acid biosynthesis, the transfer of the anionic cell wall polymers (APs) from their lipid-linked precursor to the cell wall peptidoglycan (PG). This is Polyisoprenyl-teichoic acid--peptidoglycan teichoic acid transferase TagU from Bacillus mycoides (strain KBAB4) (Bacillus weihenstephanensis).